We begin with the raw amino-acid sequence, 411 residues long: Argininosuccinate synthase (411 aa).

ATP contacts are provided by residues 10–18 and Ala37; that span reads AYSGGLDTS. Residues Tyr89 and Ser94 each coordinate L-citrulline. Residue Gly119 coordinates ATP. Positions 121, 125, and 126 each coordinate L-aspartate. Asn125 provides a ligand contact to L-citrulline. The L-citrulline site is built by Arg129, Ser178, Ser187, Glu263, and Tyr275.

It belongs to the argininosuccinate synthase family. Type 1 subfamily. Homotetramer.

It is found in the cytoplasm. The enzyme catalyses L-citrulline + L-aspartate + ATP = 2-(N(omega)-L-arginino)succinate + AMP + diphosphate + H(+). It participates in amino-acid biosynthesis; L-arginine biosynthesis; L-arginine from L-ornithine and carbamoyl phosphate: step 2/3. This is Argininosuccinate synthase from Aeromonas salmonicida (strain A449).